The chain runs to 661 residues: Polyadenylate-binding protein, cytoplasmic and nuclear (661 aa).

Over residues 1–11 (MSAAETNQVQE) the composition is skewed to polar residues. Residues 1 to 61 (MSAAETNQVQ…SAEEQGESSG (61 aa)) form a disordered region. Residues 20-51 (SSSSPAAGGATTATTTNNAESSDATSSSVPAD) show a composition bias toward low complexity. RRM domains are found at residues 67-145 (ASLY…WSQR), 155-232 (GNIF…KHVS), 248-325 (TNIY…RAQK), and 351-428 (VNLF…LAQR). Residues 473–563 (FPPNGRGNAP…PNRPAGGNVP (91 aa)) are disordered. The segment covering 501 to 511 (EQWPRPGPNGQ) has biased composition (pro residues). Over residues 523-532 (QDFNGQNMRP) the composition is skewed to polar residues. A compositionally biased stretch (low complexity) spans 533 to 549 (QQQQQQQQQQQQQQQQQ). The PABC domain maps to 563 to 644 (PAKDLAALIA…ALNAFEEYKN (82 aa)).

Belongs to the polyadenylate-binding protein type-1 family.

It is found in the cytoplasm. Its subcellular location is the nucleus. In terms of biological role, binds the poly(A) tail of mRNA. Appears to be an important mediator of the multiple roles of the poly(A) tail in mRNA biogenesis, stability and translation. In the nucleus, involved in both mRNA cleavage and polyadenylation. Is also required for efficient mRNA export to the cytoplasm. Acts in concert with a poly(A)-specific nuclease (PAN) to affect poly(A) tail shortening, which may occur concomitantly with either nucleocytoplasmic mRNA transport or translational initiation. In the cytoplasm, stimulates translation initiation and regulates mRNA decay through translation termination-coupled poly(A) shortening, probably mediated by PAN. The chain is Polyadenylate-binding protein, cytoplasmic and nuclear (PAB1) from Lodderomyces elongisporus (strain ATCC 11503 / CBS 2605 / JCM 1781 / NBRC 1676 / NRRL YB-4239) (Yeast).